The following is a 277-amino-acid chain: Thymidylate synthase (277 aa).

Arginine 21 provides a ligand contact to dUMP. Histidine 51 contributes to the (6R)-5,10-methylene-5,6,7,8-tetrahydrofolate binding site. 126-127 (RR) provides a ligand contact to dUMP. The Nucleophile role is filled by cysteine 159. DUMP contacts are provided by residues 179–182 (RSAD), asparagine 190, and 220–222 (HLY). Aspartate 182 is a binding site for (6R)-5,10-methylene-5,6,7,8-tetrahydrofolate. A (6R)-5,10-methylene-5,6,7,8-tetrahydrofolate-binding site is contributed by serine 276.

Belongs to the thymidylate synthase family. Bacterial-type ThyA subfamily. In terms of assembly, homodimer.

The protein resides in the cytoplasm. It carries out the reaction dUMP + (6R)-5,10-methylene-5,6,7,8-tetrahydrofolate = 7,8-dihydrofolate + dTMP. It functions in the pathway pyrimidine metabolism; dTTP biosynthesis. In terms of biological role, catalyzes the reductive methylation of 2'-deoxyuridine-5'-monophosphate (dUMP) to 2'-deoxythymidine-5'-monophosphate (dTMP) while utilizing 5,10-methylenetetrahydrofolate (mTHF) as the methyl donor and reductant in the reaction, yielding dihydrofolate (DHF) as a by-product. This enzymatic reaction provides an intracellular de novo source of dTMP, an essential precursor for DNA biosynthesis. The chain is Thymidylate synthase from Teredinibacter turnerae (strain ATCC 39867 / T7901).